Reading from the N-terminus, the 870-residue chain is METTLPLPFLVGVSVPPGLNDIKEGLSREEVSCLGCVFFEVKPQTLEKILRFLKRHNVEFEPYFDVTALESIDDIITLLDAGARKVFVKTEQLADLSAYGSRVAPIVTGSSAALLSSATESGLLLSGFDQTASEAAQFLEEARDKKITPFFIKPVPGADLEQFIQVAAKANAIPILPSTGLTTKKDEAGKLAISTILSSVWKSDRPDGLLPTVVVDEHDTALGLVYSSAESVNEALRTQTGVYQSRKRGLWYKGATSGDTQELVRISLDCDNDALKFVVKQKGRFCHLDQSGCFGQLKGLPKLEQTLISRKQSAPEGSYTARLFSDEKLVRAKIMEEAEELCTAQTPQEIAFEAADLFYFALTRAVAAGVTLADIERSLDAKSWKVKRRTGDAKGKWAEKEGIKPAASALAATSAPVTKEAAQETTPEKITMRRFDASKVSTEELDAALKRPAQKSSDAIYKIIVPIIEDVRKNGDKAVLSYTHKFEKATSLTSPVLKAPFPKELMQLPEETIAAIDVSFENIRKFHAAQKEEKPLQVETMPGVVCSRFSRPIEAVGCYIPGGTAVLPSTALMLGVPAMVAGCNKIVFASPPRADGTITPEIVYVAHKVGAESIVLAGGAQAVAAMAYGTESITKVDKILGPGNQFVTAAKMFVSNDTNAAVGIDMPAGPSEVLVIADKDANPAFVASDLLSQAEHGVDSQVILIAIDLDEEHLQAIEDEVHRQATELPRVQIVRGSIAHSITVQVKTVEEAMELSNKYAPEHLILQIKEAEKAVDLVMNAGSVFIGAWTPESVGDYSAGVNHSLPTYGFAKQYSGVNLASFVKHITSSNLTAEGLKNVGQAVMQLAKVEELEAHRRAVSIRLEHMSKSN.

The tract at residues 1-285 is phosphoribosyl-AMP cyclohydrolase; that stretch reads METTLPLPFL…KFVVKQKGRF (285 aa). The tract at residues 286–367 is phosphoribosyl-ATP pyrophosphohydrolase; it reads CHLDQSGCFG…FYFALTRAVA (82 aa). The histidinol dehydrogenase stretch occupies residues 368 to 870; sequence AGVTLADIER…IRLEHMSKSN (503 aa). Zn(2+) is bound by residues glutamine 693 and histidine 696. Catalysis depends on residues glutamate 762 and histidine 763. The Zn(2+) site is built by aspartate 796 and histidine 855.

It in the C-terminal section; belongs to the histidinol dehydrogenase family. Requires Zn(2+) as cofactor.

The catalysed reaction is 1-(5-phospho-beta-D-ribosyl)-5'-AMP + H2O = 1-(5-phospho-beta-D-ribosyl)-5-[(5-phospho-beta-D-ribosylamino)methylideneamino]imidazole-4-carboxamide. It carries out the reaction 1-(5-phospho-beta-D-ribosyl)-ATP + H2O = 1-(5-phospho-beta-D-ribosyl)-5'-AMP + diphosphate + H(+). It catalyses the reaction L-histidinol + 2 NAD(+) + H2O = L-histidine + 2 NADH + 3 H(+). The protein operates within amino-acid biosynthesis; L-histidine biosynthesis; L-histidine from 5-phospho-alpha-D-ribose 1-diphosphate: step 2/9. It functions in the pathway amino-acid biosynthesis; L-histidine biosynthesis; L-histidine from 5-phospho-alpha-D-ribose 1-diphosphate: step 3/9. It participates in amino-acid biosynthesis; L-histidine biosynthesis; L-histidine from 5-phospho-alpha-D-ribose 1-diphosphate: step 9/9. The chain is Histidine biosynthesis trifunctional protein (his-3) from Neurospora crassa (strain ATCC 24698 / 74-OR23-1A / CBS 708.71 / DSM 1257 / FGSC 987).